We begin with the raw amino-acid sequence, 149 residues long: Arginine repressor (149 aa).

It belongs to the ArgR family.

It localises to the cytoplasm. The protein operates within amino-acid biosynthesis; L-arginine biosynthesis [regulation]. In terms of biological role, regulates arginine biosynthesis genes. The protein is Arginine repressor of Oceanobacillus iheyensis (strain DSM 14371 / CIP 107618 / JCM 11309 / KCTC 3954 / HTE831).